The following is a 570-amino-acid chain: Molecular chaperone MKKS (570 aa).

ATP is bound at residue 192–199; that stretch reads ERMVLGKS. The substrate-binding apical domain stretch occupies residues 198 to 370; the sequence is KSIIVPLKGQ…FHLLPNEATV (173 aa).

This sequence belongs to the TCP-1 chaperonin family. As to quaternary structure, component of a complex composed at least of MKKS, BBS10, BBS12, TCP1, CCT2, CCT3, CCT4, CCT5 and CCT8. Interacts with STUB1. Interacts with BBS2 (via coiled coil domain). Interacts with CCDC28B. Interacts with BBS12. Interacts with SMARCC1, a component of the SWI/SNF complexes; the interaction takes place predominantly in the cytoplasm and may modulate SMARCC1 location. Interacts with DLEC1. In terms of tissue distribution, widely expressed in adult and fetal tissues. Expressed in the developing heart, brain retina, limb buds, as well as in the developing neural tube. Expressed in the embryo in the first and second branchial arches. Expressed in parafin embedded tissue sections of brain, kidney, retina, olfactory epithelium and the ependymal layer of ventricles. Detected only in restricted regions of these tissue sections, including the ciliated border of renal tubules, the connecting cilium and the inner and outer nuclear layers of retina, and the ciliated layer of olfactory epithelia.

The protein localises to the cytoplasm. The protein resides in the cytoskeleton. It localises to the microtubule organizing center. Its subcellular location is the centrosome. It is found in the cytosol. The protein localises to the nucleus. In terms of biological role, probable molecular chaperone that assists the folding of proteins upon ATP hydrolysis. Plays a role in the assembly of BBSome, a complex involved in ciliogenesis regulating transports vesicles to the cilia. May play a role in protein processing in limb, cardiac and reproductive system development. May play a role in cytokinesis. This is Molecular chaperone MKKS (Mkks) from Mus musculus (Mouse).